Reading from the N-terminus, the 892-residue chain is Ataxin-7 (892 aa).

Residues 1–15 are compositionally biased toward basic and acidic residues; that stretch reads MSERAADDVRGEPRR. Disordered regions lie at residues 1-74 and 195-247; these read MSER…SAAA and SKGG…SRVP. Residues 16-38 are compositionally biased toward low complexity; the sequence is AAAAAGGAAAAAARQQQQQQQQQ. The segment covering 39–55 has biased composition (pro residues); it reads QPPPPQPQRQQHPPPPP. Over residues 195–222 the composition is skewed to low complexity; it reads SKGGSASGSNRSSSGGVLSASSSSSKLL. A Glycyl lysine isopeptide (Lys-Gly) (interchain with G-Cter in SUMO); alternate cross-link involves residue Lys257. A Glycyl lysine isopeptide (Lys-Gly) (interchain with G-Cter in SUMO2); alternate cross-link involves residue Lys257. Disordered stretches follow at residues 298-328, 389-505, 616-730, and 818-892; these read PTLP…NSNN, HKNK…ESVE, KSVP…SSHS, and SHGS…KARP. Basic and acidic residues-rich tracts occupy residues 318–327 and 389–403; these read LEKKPEDNSN and HKNK…RHPD. The 68-residue stretch at 334–401 folds into the SCA7 domain; the sequence is KRLSEREFDP…KTREKELIRH (68 aa). Composition is skewed to pro residues over residues 405–419, 448–458, and 468–483; these read QQPP…PAPP, HTPSLPRPPGC, and IDPP…PLPA. Positions 493 to 502 are enriched in acidic residues; it reads EEGEGDDKEE. Positions 616-629 are enriched in polar residues; that stretch reads KSVPAHGTTLNAQP. Residues 640–669 are compositionally biased toward low complexity; sequence SMQSRQVSSSSSSPSTPSGLSSVPSSPMSR. Residues 670–680 show a composition bias toward basic residues; sequence KPQKLKSSKSL. The span at 685–695 shows a compositional bias: polar residues; it reads SSGNSTNCQNA. 2 stretches are compositionally biased toward low complexity: residues 716–730 and 840–851; these read HSSS…SSHS and SPSSSSINNSSS.

The protein belongs to the ataxin-7 family. As to quaternary structure, component of the SAGA transcription coactivator-HAT complex, at least composed of SUPT3H, GCN5L2, TAF5L, TAF6L, SUPT7L, TADA3L, TAD1L, TAF10, TAF12, TRRAP, TAF9 and ATXN7. The STAGA core complex is associated with a subcomplex required for histone deubiquitination composed of ATXN7L3, ENY2 and USP22. Interacts with SORBS1, PSMC1 and CRX. Interacts with TRRAP, GCN5L2 and TAF10. Interacts with alpha tubulin. In terms of processing, proteolytically cleaved by caspase-7 (CASP7). The cleavage may be involved in SCA7 degeneration: the isoform fragments may exert distinct toxic influences that could contribute to selective neurodegeneration. Post-translationally, sumoylation decreases the aggregation propensity and cellular toxicity of forms with an expanded poly-Gln region but has no effect on subcellular location or interaction with components of the STAGA complex. In terms of tissue distribution, isoform a is expressed in CNS, but is expressed predominantly in the peripherical tissues. Isoform b is expressed in CNS. Also highly expressed in the frontal lobe, skeletal muscle and spinal cord and is expressed at a lower level in the lung, lymphoblast and intestine.

Its subcellular location is the nucleus. It localises to the nucleolus. The protein resides in the nucleus matrix. It is found in the cytoplasm. The protein localises to the cytoskeleton. Acts as a component of the SAGA (aka STAGA) transcription coactivator-HAT complex. Mediates the interaction of SAGA complex with the CRX and is involved in CRX-dependent gene activation. Probably involved in tethering the deubiquitination module within the SAGA complex. Necessary for microtubule cytoskeleton stabilization. Involved in neurodegeneration. This is Ataxin-7 (ATXN7) from Homo sapiens (Human).